A 185-amino-acid polypeptide reads, in one-letter code: Dual specificity protein phosphatase 3 (185 aa).

The region spanning Gln-28 to Lys-179 is the Tyrosine-protein phosphatase domain. Cys-124 serves as the catalytic Phosphocysteine intermediate.

It belongs to the protein-tyrosine phosphatase family. Non-receptor class dual specificity subfamily. As to quaternary structure, microtubule inner protein component of sperm flagellar doublet microtubules. Interacts with VRK3; this interaction activates DUSP3 phosphatase activity.

The protein resides in the nucleus. It is found in the cytoplasm. The protein localises to the cytoskeleton. Its subcellular location is the flagellum axoneme. It carries out the reaction O-phospho-L-tyrosyl-[protein] + H2O = L-tyrosyl-[protein] + phosphate. The enzyme catalyses O-phospho-L-seryl-[protein] + H2O = L-seryl-[protein] + phosphate. The catalysed reaction is O-phospho-L-threonyl-[protein] + H2O = L-threonyl-[protein] + phosphate. Shows activity both for tyrosine-protein phosphate and serine-protein phosphate, but displays a strong preference toward phosphotyrosines. Specifically dephosphorylates and inactivates ERK1 and ERK2. The chain is Dual specificity protein phosphatase 3 (Dusp3) from Mus musculus (Mouse).